We begin with the raw amino-acid sequence, 397 residues long: Acetate kinase (397 aa).

Asn-8 serves as a coordination point for Mg(2+). Position 15 (Lys-15) interacts with ATP. Arg-89 lines the substrate pocket. Asp-146 serves as the catalytic Proton donor/acceptor. ATP contacts are provided by residues His-206–Gly-210, Asp-283–Arg-285, and Gly-331–Asn-335. A Mg(2+)-binding site is contributed by Glu-383.

It belongs to the acetokinase family. In terms of assembly, homodimer. The cofactor is Mg(2+). It depends on Mn(2+) as a cofactor.

The protein localises to the cytoplasm. The catalysed reaction is acetate + ATP = acetyl phosphate + ADP. It participates in metabolic intermediate biosynthesis; acetyl-CoA biosynthesis; acetyl-CoA from acetate: step 1/2. Its function is as follows. Catalyzes the formation of acetyl phosphate from acetate and ATP. Can also catalyze the reverse reaction. The protein is Acetate kinase of Streptococcus agalactiae serotype III (strain NEM316).